A 188-amino-acid polypeptide reads, in one-letter code: GTP cyclohydrolase 1 (188 aa).

Zn(2+) is bound by residues cysteine 76, histidine 79, and cysteine 148.

The protein belongs to the GTP cyclohydrolase I family. As to quaternary structure, homomer.

It carries out the reaction GTP + H2O = 7,8-dihydroneopterin 3'-triphosphate + formate + H(+). The protein operates within cofactor biosynthesis; 7,8-dihydroneopterin triphosphate biosynthesis; 7,8-dihydroneopterin triphosphate from GTP: step 1/1. The polypeptide is GTP cyclohydrolase 1 (Thermoanaerobacter pseudethanolicus (strain ATCC 33223 / 39E) (Clostridium thermohydrosulfuricum)).